Consider the following 354-residue polypeptide: Cellular communication network factor 6 (354 aa).

Positions Met1–Gly23 are cleaved as a signal peptide. Residues Arg44 to Leu117 form the IGFBP N-terminal domain. 13 disulfide bridges follow: Cys48–Cys72, Cys52–Cys74, Cys54–Cys75, Cys61–Cys78, Cys86–Cys100, Cys92–Cys114, Cys209–Cys238, Cys219–Cys223, Cys247–Cys252, Cys268–Cys305, Cys285–Cys319, Cys296–Cys335, and Cys299–Cys337. The 46-residue stretch at Lys208 to Ser253 folds into the TSP type-1 domain. Positions Cys268–Arg342 constitute a CTCK domain. N-linked (GlcNAc...) asparagine glycosylation is present at Asn308.

The protein belongs to the CCN family.

It localises to the secreted. The protein localises to the mitochondrion. Plays a role in mitochondrial electron transport and mitochondrial respiration. The sequence is that of Cellular communication network factor 6 from Mus musculus (Mouse).